Consider the following 125-residue polypeptide: uncharacterized protein (125 aa).

A disordered region spans residues 36 to 57 (EAKKAKEKQDSKTKDTDKKVDQ). Residues 92–112 (ITIFLLIVLVSAIMIGIYFGI) traverse the membrane as a helical segment.

It localises to the membrane. This is an uncharacterized protein from Mycoplasma pneumoniae (strain ATCC 29342 / M129 / Subtype 1) (Mycoplasmoides pneumoniae).